Reading from the N-terminus, the 523-residue chain is 2-isopropylmalate synthase (523 aa).

A Pyruvate carboxyltransferase domain is found at 5–267; sequence VIIFDTTLRD…HTNINHHEIW (263 aa). Mn(2+) is bound by residues Asp-14, His-202, His-204, and Asn-238. Residues 392–523 form a regulatory domain region; it reads RLDYFSVQSG…QNKENNKETV (132 aa).

It belongs to the alpha-IPM synthase/homocitrate synthase family. LeuA type 1 subfamily. In terms of assembly, homodimer. It depends on Mn(2+) as a cofactor.

Its subcellular location is the cytoplasm. It carries out the reaction 3-methyl-2-oxobutanoate + acetyl-CoA + H2O = (2S)-2-isopropylmalate + CoA + H(+). The protein operates within amino-acid biosynthesis; L-leucine biosynthesis; L-leucine from 3-methyl-2-oxobutanoate: step 1/4. Functionally, catalyzes the condensation of the acetyl group of acetyl-CoA with 3-methyl-2-oxobutanoate (2-ketoisovalerate) to form 3-carboxy-3-hydroxy-4-methylpentanoate (2-isopropylmalate). This chain is 2-isopropylmalate synthase, found in Salmonella typhi.